Consider the following 425-residue polypeptide: MDRNKEIFEESKKYMPGGVNSPVRSFGSVGINPPVIKSGKGAMIKDENGNEYIDFVLAWGPMILGHCDEDVVEAIKKTSEESIAFGASTKLELDLAKILCETLDNVDMIRMVNSGTEATMSAVKLARGYTKKDKIIKFAGCYHGHFDGFLIEAGSGVLTEGIPGCLGVPEESIKNTLIGIYNDEKQVEELFEKYGNDIAGIIIEPVAGNMGVVKCDPKFMRKLRELCDKYEALLIFDEVMCGFRVAYKGAQTLFDVKPDLVTYAKIMGGGLPCGAYGGRREIMENLSPLGGVYQAGTMSGNPIVMSAGLATVKKLYENPSYYDHIEKIGSKLEKGIIEIAKKKGLGLVVNRQGGMMTLFFTDLKEVKCYDDVKTCDGERFKRYFLHMLNKGFNIPPSQFEAMFLSVKHTEEHIDKFLEAFESFEG.

Lys265 bears the N6-(pyridoxal phosphate)lysine mark.

Belongs to the class-III pyridoxal-phosphate-dependent aminotransferase family. HemL subfamily. Homodimer. Pyridoxal 5'-phosphate serves as cofactor.

Its subcellular location is the cytoplasm. The enzyme catalyses (S)-4-amino-5-oxopentanoate = 5-aminolevulinate. It functions in the pathway porphyrin-containing compound metabolism; protoporphyrin-IX biosynthesis; 5-aminolevulinate from L-glutamyl-tRNA(Glu): step 2/2. This Clostridium perfringens (strain SM101 / Type A) protein is Glutamate-1-semialdehyde 2,1-aminomutase.